The chain runs to 304 residues: Protease HtpX homolog (304 aa).

Transmembrane regions (helical) follow at residues 14–34 (IFIILGFFIFVLMVGAAIGII) and 39–59 (YLNGLVLAAVIGAFYILIMVM). Residue H144 coordinates Zn(2+). E145 is a catalytic residue. A Zn(2+)-binding site is contributed by H148. 2 consecutive transmembrane segments (helical) span residues 159–179 (IAIALVAVIAILSDIAMRMIF) and 202–222 (AIIYIVALIFVILAPIIATAI). E231 contacts Zn(2+).

It belongs to the peptidase M48B family. Zn(2+) serves as cofactor.

The protein localises to the cell membrane. The protein is Protease HtpX homolog of Listeria monocytogenes serovar 1/2a (strain ATCC BAA-679 / EGD-e).